The sequence spans 489 residues: Rhamnulokinase (489 aa).

13–17 lines the ATP pocket; the sequence is ASSGR. The cysteines at positions 68 and 222 are disulfide-linked. Substrate-binding positions include G83 and 236–238; that span reads HDT. Residue D237 is the Proton acceptor of the active site. T259 is an ATP binding site. N296 contributes to the substrate binding site. Position 304 (Q304) interacts with ATP. An intrachain disulfide couples C353 to C370. G402 lines the ATP pocket. C413 and C417 are disulfide-bonded.

The protein belongs to the rhamnulokinase family. As to quaternary structure, monomer. The cofactor is Mg(2+).

The enzyme catalyses L-rhamnulose + ATP = L-rhamnulose 1-phosphate + ADP + H(+). It functions in the pathway carbohydrate degradation; L-rhamnose degradation; glycerone phosphate from L-rhamnose: step 2/3. Functionally, involved in the catabolism of L-rhamnose (6-deoxy-L-mannose). Catalyzes the transfer of the gamma-phosphate group from ATP to the 1-hydroxyl group of L-rhamnulose to yield L-rhamnulose 1-phosphate. The chain is Rhamnulokinase from Escherichia coli O1:K1 / APEC.